The chain runs to 308 residues: Ribosomal RNA large subunit methyltransferase F (308 aa).

Belongs to the methyltransferase superfamily. METTL16/RlmF family.

Its subcellular location is the cytoplasm. It catalyses the reaction adenosine(1618) in 23S rRNA + S-adenosyl-L-methionine = N(6)-methyladenosine(1618) in 23S rRNA + S-adenosyl-L-homocysteine + H(+). Specifically methylates the adenine in position 1618 of 23S rRNA. The sequence is that of Ribosomal RNA large subunit methyltransferase F from Shigella dysenteriae serotype 1 (strain Sd197).